Here is a 286-residue protein sequence, read N- to C-terminus: MTGTLERENWISGGKSLVLRKQHPGPLRPWRKRAAQLGGGCGWRTAVAPAKFCLWYVVPSWLWEPPGYLHSSLFLSILFQVTLLETALQSRPNLSLPLVRCGWACTQAMSTRSNCGSRSFLWAQTQADAASGLPRSRLGFLGLGGCGLIVKHGMTLRNWASFFVVFQAWSLMILQVLGDMLNIYYAYIQATLTLKVDVAPRLFFPEGGALKEHFSSMDSFQLREAGGTRIPRPALIYGRAVVTRTVTKAQSLKSALAWAALGCKHPVLSTLCEESQQGAWSEFRRF.

2 helical membrane passes run 68 to 88 (YLHSSLFLSILFQVTLLETAL) and 161 to 181 (SFFVVFQAWSLMILQVLGDML).

The protein belongs to the FAM87 family.

The protein resides in the membrane. The protein is Protein FAM87A (FAM87A) of Homo sapiens (Human).